Reading from the N-terminus, the 432-residue chain is 3-oxo-tetronate kinase (432 aa).

Residues histidine 155, serine 272, alanine 324, glycine 344, glutamate 348, 370 to 373 (GGET), and glycine 414 each bind ATP.

Belongs to the four-carbon acid sugar kinase family.

It catalyses the reaction 3-dehydro-L-erythronate + ATP = 3-dehydro-4-O-phospho-L-erythronate + ADP + H(+). It carries out the reaction 3-dehydro-D-erythronate + ATP = 3-dehydro-4-O-phospho-D-erythronate + ADP + H(+). In terms of biological role, catalyzes the ATP-dependent phosphorylation of 3-oxo-tetronate to 3-oxo-tetronate 4-phosphate. The protein is 3-oxo-tetronate kinase of Cupriavidus necator (strain ATCC 17699 / DSM 428 / KCTC 22496 / NCIMB 10442 / H16 / Stanier 337) (Ralstonia eutropha).